A 543-amino-acid polypeptide reads, in one-letter code: Carboxypeptidase Y homolog A (543 aa).

The first 17 residues, 1–17 (MRVLPATLLVGAATAAA), serve as a signal peptide directing secretion. A propeptide spanning residues 18–124 (PPFQQILGLP…KLEAYDLRVK (107 aa)) is cleaved from the precursor. 5 disulfides stabilise this stretch: cysteine 179/cysteine 419, cysteine 313/cysteine 327, cysteine 337/cysteine 360, cysteine 344/cysteine 353, and cysteine 382/cysteine 389. The N-linked (GlcNAc...) asparagine glycan is linked to asparagine 210. Serine 266 is an active-site residue. Residue aspartate 458 is part of the active site. Asparagine 509 carries an N-linked (GlcNAc...) asparagine glycan. The active site involves histidine 520.

The protein belongs to the peptidase S10 family.

It localises to the vacuole. It carries out the reaction Release of a C-terminal amino acid with broad specificity.. Vacuolar carboxypeptidase involved in degradation of small peptides. Digests preferentially peptides containing an aliphatic or hydrophobic residue in P1' position, as well as methionine, leucine or phenylalanine in P1 position of ester substrate. The chain is Carboxypeptidase Y homolog A (cpyA) from Aspergillus fumigatus (strain ATCC MYA-4609 / CBS 101355 / FGSC A1100 / Af293) (Neosartorya fumigata).